We begin with the raw amino-acid sequence, 369 residues long: Phosphoribosylformylglycinamidine cyclo-ligase (369 aa).

The tract at residues 1–22 (MSKRDTSQPKTGQPKTSKRRNG) is disordered.

Belongs to the AIR synthase family.

The protein resides in the cytoplasm. The enzyme catalyses 2-formamido-N(1)-(5-O-phospho-beta-D-ribosyl)acetamidine + ATP = 5-amino-1-(5-phospho-beta-D-ribosyl)imidazole + ADP + phosphate + H(+). Its pathway is purine metabolism; IMP biosynthesis via de novo pathway; 5-amino-1-(5-phospho-D-ribosyl)imidazole from N(2)-formyl-N(1)-(5-phospho-D-ribosyl)glycinamide: step 2/2. The sequence is that of Phosphoribosylformylglycinamidine cyclo-ligase from Mesorhizobium japonicum (strain LMG 29417 / CECT 9101 / MAFF 303099) (Mesorhizobium loti (strain MAFF 303099)).